A 98-amino-acid polypeptide reads, in one-letter code: NADH-ubiquinone oxidoreductase chain 4L (98 aa).

3 helical membrane-spanning segments follow: residues 1-21 (MPSI…GTLI), 26-46 (LMSS…LTSL), and 61-81 (IILL…LVMV).

It belongs to the complex I subunit 4L family. As to quaternary structure, core subunit of respiratory chain NADH dehydrogenase (Complex I) which is composed of 45 different subunits.

The protein localises to the mitochondrion inner membrane. It catalyses the reaction a ubiquinone + NADH + 5 H(+)(in) = a ubiquinol + NAD(+) + 4 H(+)(out). Core subunit of the mitochondrial membrane respiratory chain NADH dehydrogenase (Complex I) which catalyzes electron transfer from NADH through the respiratory chain, using ubiquinone as an electron acceptor. Part of the enzyme membrane arm which is embedded in the lipid bilayer and involved in proton translocation. This is NADH-ubiquinone oxidoreductase chain 4L (MT-ND4L) from Otolemur crassicaudatus (Brown greater galago).